A 375-amino-acid polypeptide reads, in one-letter code: Putative serine protease 47 (375 aa).

A signal peptide spans 1 to 23 (MGYCQGVSQVAVVLLMFPKEKEA). The segment at 41 to 60 (DGQLPMGPHSRASQVAPETT) is disordered. Polar residues predominate over residues 51–60 (RASQVAPETT). Residues 81 to 323 (IYGGRDAAAG…FINWIDEIMR (243 aa)) form the Peptidase S1 domain. A disulfide bridge connects residues Cys-106 and Cys-122. Catalysis depends on charge relay system residues His-121 and Asp-172. N-linked (GlcNAc...) asparagine glycans are attached at residues Asn-183 and Asn-203. A disulfide bridge links Cys-206 with Cys-281. Ser-275 (charge relay system) is an active-site residue.

This sequence belongs to the peptidase S1 family.

The protein resides in the secreted. In Homo sapiens (Human), this protein is Putative serine protease 47 (PRSS47P).